The sequence spans 371 residues: tRNA (guanine(26)-N(2))-dimethyltransferase (371 aa).

The Trm1 methyltransferase domain occupies 4–368 (IEVTEGRTTF…APLDAIAAAL (365 aa)). S-adenosyl-L-methionine is bound by residues arginine 41, arginine 66, aspartate 82, aspartate 108, and alanine 109. The Zn(2+) site is built by cysteine 237, cysteine 240, cysteine 256, and cysteine 259.

It belongs to the class I-like SAM-binding methyltransferase superfamily. Trm1 family.

It carries out the reaction guanosine(26) in tRNA + 2 S-adenosyl-L-methionine = N(2)-dimethylguanosine(26) in tRNA + 2 S-adenosyl-L-homocysteine + 2 H(+). In terms of biological role, dimethylates a single guanine residue at position 26 of a number of tRNAs using S-adenosyl-L-methionine as donor of the methyl groups. The polypeptide is tRNA (guanine(26)-N(2))-dimethyltransferase (Methanosphaerula palustris (strain ATCC BAA-1556 / DSM 19958 / E1-9c)).